The primary structure comprises 290 residues: Shikimate dehydrogenase (NADP(+)) (290 aa).

Shikimate-binding positions include 21 to 23 (SLS) and threonine 68. Lysine 72 functions as the Proton acceptor in the catalytic mechanism. NADP(+) is bound at residue glutamate 84. Shikimate contacts are provided by asparagine 93 and aspartate 108. NADP(+) is bound by residues 132-136 (GYGGA) and leucine 230. Residue tyrosine 232 participates in shikimate binding. Glycine 253 contributes to the NADP(+) binding site.

It belongs to the shikimate dehydrogenase family. Homodimer.

The catalysed reaction is shikimate + NADP(+) = 3-dehydroshikimate + NADPH + H(+). It participates in metabolic intermediate biosynthesis; chorismate biosynthesis; chorismate from D-erythrose 4-phosphate and phosphoenolpyruvate: step 4/7. Functionally, involved in the biosynthesis of the chorismate, which leads to the biosynthesis of aromatic amino acids. Catalyzes the reversible NADPH linked reduction of 3-dehydroshikimate (DHSA) to yield shikimate (SA). The protein is Shikimate dehydrogenase (NADP(+)) of Synechocystis sp. (strain ATCC 27184 / PCC 6803 / Kazusa).